We begin with the raw amino-acid sequence, 90 residues long: Putative Fis-like DNA-binding protein (90 aa).

A DNA-binding region (H-T-H motif) is located at residues 66 to 85; it reads QSRAAALLGIHRATLRKKLK.

It belongs to the transcriptional regulatory Fis family.

The sequence is that of Putative Fis-like DNA-binding protein from Xylella fastidiosa (strain 9a5c).